Here is a 546-residue protein sequence, read N- to C-terminus: Carboxylic ester hydrolase FVEG_12634 (546 aa).

The tract at residues 72–91 (FTDGTKICPQPPSSNTPDPS) is disordered. Catalysis depends on S214, which acts as the Acyl-ester intermediate.

It belongs to the type-B carboxylesterase/lipase family.

The enzyme catalyses a carboxylic ester + H2O = an alcohol + a carboxylate + H(+). Functionally, carboxylic ester hydrolase; part of the Fusarium detoxification of benzoxazolinone cluster 2 (FDB2) involved in the degradation of benzoxazolinones produced by the host plant. Maize, wheat, and rye produce the 2 benzoxazinone phytoanticipins 2,4-dihy-droxy-7-methoxy-1,4-benzoxazin-3-one (DIMBOA) and 2,4-dihydroxy-1,4-benzoxazin-3-one (DIBOA) that, due to their inherent instability once released, spontaneously degrade to the more stable corresponding benzoxazolinones, 6-methoxy-2-benzoxazolinone (MBOA) and 2-benzoxazolinone (BOA), respectively. The first step in the detoxification of benzoxazolinones involves the hydrolysis of the cyclic ester bond of benzoxazolinones by the FDB1 cluster gamma-lactamase MBL1 to aminophenols. MBL1 is able to convert BOA into 2-aminophenol (2-AP), as well as MBOA into 5-methoxy-2-aminophenol (2-AMP). The FDB2 cluster N-malonyltransferase FDB2/NAT1 then metabolizes aminophenols via N-malonylation to non-toxic malonamic acids. FDB2/NAT1 converts 2-AP into N-(2-hydroxyphenyl) malonamic acid (HPMA) and 2-AMP into N-(2-hydroxy-4-methoxyphenyl) malonamic acid (HMPMA). The duplicated dienlactone hydrolases DLH1 and DLH2 may provide redundant function for hydrolyzing the lactone moiety in the BOA molecule. The roles of the amidases an other enzymes encoded by the 2 FDB clusters have not been identified so far. The polypeptide is Carboxylic ester hydrolase FVEG_12634 (Gibberella moniliformis (strain M3125 / FGSC 7600) (Maize ear and stalk rot fungus)).